Here is a 578-residue protein sequence, read N- to C-terminus: Hemolysin 4 (578 aa).

The tract at residues 289–322 (KDGPKASWRRRPSSASSVTMPTTPRIIGSNARPE) is disordered. Residues 448–539 (RPVNLQLGGF…LSNLSAHQLL (92 aa)) form the Ricin B-type lectin domain.

Belongs to the HlyA hemolysin family.

In terms of biological role, bacterial hemolysins are exotoxins that attack blood cell membranes and cause cell rupture by mechanisms not clearly defined. The protein is Hemolysin 4 (ash4) of Aeromonas salmonicida.